Here is a 713-residue protein sequence, read N- to C-terminus: Polyribonucleotide nucleotidyltransferase (713 aa).

Mg(2+) contacts are provided by D485 and D491. In terms of domain architecture, KH spans 552 to 611; sequence PRIYTMKIDPKKIKDVIGKGGATVRSLTEETGTSIDIDDDGTVKIAAVDKNAVQEVMSRI. One can recognise an S1 motif domain in the interval 621–689; that stretch reads GVVYKGKVTR…RQGRIRLTMK (69 aa). Residues 694–713 form a disordered region; that stretch reads DQTKNEENLLQSEEGSPVQE. Polar residues predominate over residues 701 to 713; the sequence is NLLQSEEGSPVQE.

It belongs to the polyribonucleotide nucleotidyltransferase family. Component of the RNA degradosome, which is a multiprotein complex involved in RNA processing and mRNA degradation. Mg(2+) serves as cofactor.

It localises to the cytoplasm. It carries out the reaction RNA(n+1) + phosphate = RNA(n) + a ribonucleoside 5'-diphosphate. Its function is as follows. Involved in mRNA degradation. Catalyzes the phosphorolysis of single-stranded polyribonucleotides processively in the 3'- to 5'-direction. In Histophilus somni (strain 2336) (Haemophilus somnus), this protein is Polyribonucleotide nucleotidyltransferase.